We begin with the raw amino-acid sequence, 84 residues long: Large ribosomal subunit protein bL31B (84 aa).

Belongs to the bacterial ribosomal protein bL31 family. Type B subfamily. In terms of assembly, part of the 50S ribosomal subunit.

This chain is Large ribosomal subunit protein bL31B, found in Staphylococcus aureus (strain Mu3 / ATCC 700698).